The following is a 354-amino-acid chain: Uroporphyrinogen decarboxylase (354 aa).

Substrate-binding positions include 27–31 (RQAGR), aspartate 77, tyrosine 154, threonine 209, and histidine 327.

Belongs to the uroporphyrinogen decarboxylase family. In terms of assembly, homodimer.

The protein resides in the cytoplasm. The catalysed reaction is uroporphyrinogen III + 4 H(+) = coproporphyrinogen III + 4 CO2. It participates in porphyrin-containing compound metabolism; protoporphyrin-IX biosynthesis; coproporphyrinogen-III from 5-aminolevulinate: step 4/4. Functionally, catalyzes the decarboxylation of four acetate groups of uroporphyrinogen-III to yield coproporphyrinogen-III. This is Uroporphyrinogen decarboxylase from Shigella dysenteriae serotype 1 (strain Sd197).